Consider the following 321-residue polypeptide: p-hydroxybenzoic acid efflux pump subunit AaeA (321 aa).

A helical transmembrane segment spans residues 22–42 (VVITLVIVLCAIVAIFRVWAF).

This sequence belongs to the membrane fusion protein (MFP) (TC 8.A.1) family.

The protein localises to the cell inner membrane. Functionally, forms an efflux pump with AaeB. The sequence is that of p-hydroxybenzoic acid efflux pump subunit AaeA from Pectobacterium atrosepticum (strain SCRI 1043 / ATCC BAA-672) (Erwinia carotovora subsp. atroseptica).